A 175-amino-acid polypeptide reads, in one-letter code: Large ribosomal subunit protein uL10 (175 aa).

This sequence belongs to the universal ribosomal protein uL10 family. As to quaternary structure, part of the ribosomal stalk of the 50S ribosomal subunit. The N-terminus interacts with L11 and the large rRNA to form the base of the stalk. The C-terminus forms an elongated spine to which L12 dimers bind in a sequential fashion forming a multimeric L10(L12)X complex.

Functionally, forms part of the ribosomal stalk, playing a central role in the interaction of the ribosome with GTP-bound translation factors. This chain is Large ribosomal subunit protein uL10, found in Prochlorococcus marinus subsp. pastoris (strain CCMP1986 / NIES-2087 / MED4).